The chain runs to 196 residues: Translation machinery-associated protein 22 (196 aa).

The SUI1 domain occupies 111-182 (IIIKRIERNK…EAKEYIEKLL (72 aa)).

The protein belongs to the DENR family. In terms of assembly, interacts with the 40S ribosomal subunit.

It localises to the cytoplasm. The polypeptide is Translation machinery-associated protein 22 (TMA22) (Lodderomyces elongisporus (strain ATCC 11503 / CBS 2605 / JCM 1781 / NBRC 1676 / NRRL YB-4239) (Yeast)).